Here is a 446-residue protein sequence, read N- to C-terminus: Phosphoglucosamine mutase (446 aa).

The active-site Phosphoserine intermediate is Ser-102. Positions 102, 241, 243, and 245 each coordinate Mg(2+). A Phosphoserine modification is found at Ser-102.

Belongs to the phosphohexose mutase family. It depends on Mg(2+) as a cofactor. In terms of processing, activated by phosphorylation.

The catalysed reaction is alpha-D-glucosamine 1-phosphate = D-glucosamine 6-phosphate. Catalyzes the conversion of glucosamine-6-phosphate to glucosamine-1-phosphate. In Idiomarina loihiensis (strain ATCC BAA-735 / DSM 15497 / L2-TR), this protein is Phosphoglucosamine mutase.